The following is a 389-amino-acid chain: Chalcone synthase J (389 aa).

C164 is an active-site residue.

Belongs to the thiolase-like superfamily. Chalcone/stilbene synthases family.

It carries out the reaction (E)-4-coumaroyl-CoA + 3 malonyl-CoA + 3 H(+) = 2',4,4',6'-tetrahydroxychalcone + 3 CO2 + 4 CoA. Its pathway is secondary metabolite biosynthesis; flavonoid biosynthesis. The primary product of this enzyme is 4,2',4',6'-tetrahydroxychalcone (also termed naringenin-chalcone or chalcone) which can under specific conditions spontaneously isomerize into naringenin. This Petunia hybrida (Petunia) protein is Chalcone synthase J (CHSJ).